The sequence spans 244 residues: Chalcone--flavanone isomerase (244 aa).

Substrate contacts are provided by threonine 45, asparagine 110, and serine 187.

This sequence belongs to the chalcone isomerase family.

The enzyme catalyses a chalcone = a flavanone.. It participates in secondary metabolite biosynthesis; flavonoid biosynthesis. Its function is as follows. Catalyzes the intramolecular cyclization of bicyclic chalcones into tricyclic (S)-flavanones. Responsible for the isomerization of 4,2',4',6'-tetrahydroxychalcone (also termed chalcone) into naringenin. The protein is Chalcone--flavanone isomerase (CHI) of Nicotiana tabacum (Common tobacco).